Here is an 875-residue protein sequence, read N- to C-terminus: Importin subunit beta-1 (875 aa).

Methionine 1 bears the N-acetylmethionine mark. 5 HEAT repeats span residues 2–31 (ELIT…AAVE), 33–64 (LPTF…IRLL), 84–122 (ANAR…EIPV), 128–159 (LIPQ…ICQD), and 169–201 (SNEI…LNSL). Residue serine 12 is modified to Phosphoserine. The region spanning 21 to 100 (AQKFLERAAV…KNYVLQTLGT (80 aa)) is the Importin N-terminal domain. Lysine 210 carries the post-translational modification N6-acetyllysine. 14 HEAT repeats span residues 211 to 246 (ESER…IMSL), 252 to 301 (ETYM…EAAE), 313 to 359 (YAKG…TCCE), 363 to 393 (VPHV…GSIL), 401 to 437 (LKPL…ICEL), 448 to 484 (LAPL…YEAA), 499 to 536 (SSSF…EIVK), 543 to 591 (YPAV…QNVL), 599 to 638 (ALQI…VEVL), 643 to 680 (LKYM…CRAL), 685 to 723 (LPFC…TLAI), 731 to 775 (LEVV…VQGL), 785 to 828 (DVML…CTAF), and 830 to 872 (KDVL…RKLK). The essential for high affinity interaction with RPL23A stretch occupies residues 285–461 (VCDEEMDLAI…LQCLIEGLSA (177 aa)). An IAB-binding region spans residues 328 to 341 (TLTKQDENDDDDDW). Residues 333 to 418 (DENDDDDDWN…MPTLIELMKD (86 aa)) are ran-GTP binding. Lysine 834 and lysine 866 each carry N6-acetyllysine.

This sequence belongs to the importin beta family. Importin beta-1 subfamily. Forms a complex with an importin alpha subunit. Interacts with XPO1. Forms a heterodimer with IPO7. The KPNB1/IPO7 heterodimer interacts with H1 histone. Interacts with SNUPN. Interacts with H2A, H2B, H3 and H4 histones. Component of an import snRNP complex composed of KPNB1, SNUPN, SMN1 and ZNF259. Component of a nuclear export receptor complex composed of KPNB1, Ran, SNUPN and XPO1. Interacts with SRY. Interacts with PRKCI/atypical protein kinase C iota. Interacts with KPNA2. Interacts with KPNA7. Interacts with SNAI1 (via zinc fingers) and SNAI2 (via zinc fingers). Interacts with SLC35G1 and STIM1. Interacts with DCAF8. Interacts with RAN. Interacts with NUMA1 (via C-terminus); this interaction is inhibited by RanGTP. Interacts with ZBED1/hDREF; required for nuclear import of ZBED1/hDREF. Interacts with SRP19. Interacts with RPL23A (via BIB domain), RPS7 and RPL5. In terms of processing, mono-ADP-ribosylated by PARP16.

Its subcellular location is the cytoplasm. The protein localises to the nucleus envelope. Its function is as follows. Functions in nuclear protein import, either in association with an adapter protein, like an importin-alpha subunit, which binds to nuclear localization signals (NLS) in cargo substrates, or by acting as autonomous nuclear transport receptor. Acting autonomously, serves itself as NLS receptor. Docking of the importin/substrate complex to the nuclear pore complex (NPC) is mediated by KPNB1 through binding to nucleoporin FxFG repeats and the complex is subsequently translocated through the pore by an energy requiring, Ran-dependent mechanism. At the nucleoplasmic side of the NPC, Ran binds to importin-beta and the three components separate and importin-alpha and -beta are re-exported from the nucleus to the cytoplasm where GTP hydrolysis releases Ran from importin. The directionality of nuclear import is thought to be conferred by an asymmetric distribution of the GTP- and GDP-bound forms of Ran between the cytoplasm and nucleus. Mediates autonomously the nuclear import of ribosomal proteins RPL23A, RPS7 and RPL5. In association with IPO7, mediates the nuclear import of H1 histone. In vitro, mediates nuclear import of H2A, H2B, H3 and H4 histones. Imports MRTFA, SNAI1 and PRKCI into the nucleus. This is Importin subunit beta-1 (Kpnb1) from Rattus norvegicus (Rat).